The following is a 252-amino-acid chain: Phosphate import ATP-binding protein PstB 1 (252 aa).

In terms of domain architecture, ABC transporter spans 6-247 (LKVNDLSVYY…PQKQETEDYI (242 aa)). 38-45 (GPSGSGKS) provides a ligand contact to ATP.

This sequence belongs to the ABC transporter superfamily. Phosphate importer (TC 3.A.1.7) family. The complex is composed of two ATP-binding proteins (PstB), two transmembrane proteins (PstC and PstA) and a solute-binding protein (PstS).

Its subcellular location is the cell membrane. It carries out the reaction phosphate(out) + ATP + H2O = ADP + 2 phosphate(in) + H(+). Its function is as follows. Part of the ABC transporter complex PstSACB involved in phosphate import. Responsible for energy coupling to the transport system. This is Phosphate import ATP-binding protein PstB 1 from Streptococcus mutans serotype c (strain ATCC 700610 / UA159).